Consider the following 261-residue polypeptide: Cytochrome c oxidase subunit 3 (261 aa).

The Mitochondrial matrix segment spans residues 1–15 (MTHQTHAYHMVNPSP). A helical transmembrane segment spans residues 16–34 (WPLTGALSALLMTSGLIMW). The Mitochondrial intermembrane portion of the chain corresponds to 35-40 (FHFNSM). Residues 41 to 66 (TLLMLGLTTNMLTMYQWWRDIIREST) traverse the membrane as a helical segment. Topologically, residues 67–72 (FQGHHT) are mitochondrial matrix. A helical membrane pass occupies residues 73 to 105 (SAVQKGLRYGMILFIISEVLFFTGFFWAFYHSS). The Mitochondrial intermembrane portion of the chain corresponds to 106 to 128 (LAPTPELGGCWPPTGIHPLNPLE). The chain crosses the membrane as a helical span at residues 129 to 152 (VPLLNTSVLLASGVSITWAHHSLM). Over 153 to 155 (EGN) the chain is Mitochondrial matrix. A helical transmembrane segment spans residues 156–183 (RNHMLQALFITIALGVYFTLLQASEYYE). Residues 184–190 (APFTISD) are Mitochondrial intermembrane-facing. The chain crosses the membrane as a helical span at residues 191 to 223 (GVYGSTFFVATGFHGLHVIIGSTFLIVCFFRQL). The Mitochondrial matrix portion of the chain corresponds to 224-232 (KFHFTSTHH). Residues 233-256 (FGFEAAAWYWHFVDVVWLFLYVSI) traverse the membrane as a helical segment. Residues 257 to 261 (YWWGS) lie on the Mitochondrial intermembrane side of the membrane.

It belongs to the cytochrome c oxidase subunit 3 family. In terms of assembly, component of the cytochrome c oxidase (complex IV, CIV), a multisubunit enzyme composed of 14 subunits. The complex is composed of a catalytic core of 3 subunits MT-CO1, MT-CO2 and MT-CO3, encoded in the mitochondrial DNA, and 11 supernumerary subunits COX4I, COX5A, COX5B, COX6A, COX6B, COX6C, COX7A, COX7B, COX7C, COX8 and NDUFA4, which are encoded in the nuclear genome. The complex exists as a monomer or a dimer and forms supercomplexes (SCs) in the inner mitochondrial membrane with NADH-ubiquinone oxidoreductase (complex I, CI) and ubiquinol-cytochrome c oxidoreductase (cytochrome b-c1 complex, complex III, CIII), resulting in different assemblies (supercomplex SCI(1)III(2)IV(1) and megacomplex MCI(2)III(2)IV(2)).

The protein resides in the mitochondrion inner membrane. The catalysed reaction is 4 Fe(II)-[cytochrome c] + O2 + 8 H(+)(in) = 4 Fe(III)-[cytochrome c] + 2 H2O + 4 H(+)(out). Its function is as follows. Component of the cytochrome c oxidase, the last enzyme in the mitochondrial electron transport chain which drives oxidative phosphorylation. The respiratory chain contains 3 multisubunit complexes succinate dehydrogenase (complex II, CII), ubiquinol-cytochrome c oxidoreductase (cytochrome b-c1 complex, complex III, CIII) and cytochrome c oxidase (complex IV, CIV), that cooperate to transfer electrons derived from NADH and succinate to molecular oxygen, creating an electrochemical gradient over the inner membrane that drives transmembrane transport and the ATP synthase. Cytochrome c oxidase is the component of the respiratory chain that catalyzes the reduction of oxygen to water. Electrons originating from reduced cytochrome c in the intermembrane space (IMS) are transferred via the dinuclear copper A center (CU(A)) of subunit 2 and heme A of subunit 1 to the active site in subunit 1, a binuclear center (BNC) formed by heme A3 and copper B (CU(B)). The BNC reduces molecular oxygen to 2 water molecules using 4 electrons from cytochrome c in the IMS and 4 protons from the mitochondrial matrix. The polypeptide is Cytochrome c oxidase subunit 3 (MT-CO3) (Damaliscus lunatus (Tsessebe)).